The sequence spans 485 residues: 28S rRNA (uridine-N(3))-methyltransferase (485 aa).

The S-adenosyl-L-methionine site is built by arginine 296, glycine 318, and asparagine 347.

The protein belongs to the class IV-like SAM-binding methyltransferase superfamily.

Its subcellular location is the nucleus. The catalysed reaction is uridine in 28S rRNA + S-adenosyl-L-methionine = N(3)-methyluridine in 28S rRNA + S-adenosyl-L-homocysteine + H(+). Functionally, S-adenosyl-L-methionine-dependent methyltransferase that specifically methylates the uridine in position 3485 of 28S rRNA. The polypeptide is 28S rRNA (uridine-N(3))-methyltransferase (Drosophila melanogaster (Fruit fly)).